The primary structure comprises 491 residues: Acetyl-coenzyme A carboxylase carboxyl transferase subunit beta, chloroplastic (491 aa).

Residues 28–56 form a disordered region; sequence LGPIENTSESEDPNRNDMKKNSHSWGSRD. The CoA carboxyltransferase N-terminal domain maps to 223-491; sequence LWVQCENCYG…FPLNKNSIEH (269 aa). Cysteine 227, cysteine 230, cysteine 246, and cysteine 249 together coordinate Zn(2+). The segment at 227 to 249 adopts a C4-type zinc-finger fold; sequence CENCYGLNYKKILKSKMNLCEQC.

Belongs to the AccD/PCCB family. As to quaternary structure, acetyl-CoA carboxylase is a heterohexamer composed of biotin carboxyl carrier protein, biotin carboxylase and 2 subunits each of ACCase subunit alpha and ACCase plastid-coded subunit beta (accD). Zn(2+) is required as a cofactor.

The protein resides in the plastid. It localises to the chloroplast stroma. It carries out the reaction N(6)-carboxybiotinyl-L-lysyl-[protein] + acetyl-CoA = N(6)-biotinyl-L-lysyl-[protein] + malonyl-CoA. It participates in lipid metabolism; malonyl-CoA biosynthesis; malonyl-CoA from acetyl-CoA: step 1/1. Component of the acetyl coenzyme A carboxylase (ACC) complex. Biotin carboxylase (BC) catalyzes the carboxylation of biotin on its carrier protein (BCCP) and then the CO(2) group is transferred by the transcarboxylase to acetyl-CoA to form malonyl-CoA. This Daucus carota (Wild carrot) protein is Acetyl-coenzyme A carboxylase carboxyl transferase subunit beta, chloroplastic.